The following is a 137-amino-acid chain: Protein phosphatase 1 regulatory subunit 1B (137 aa).

Residues aspartate 1–glutamine 137 are disordered. Threonine 33 carries the phosphothreonine; by PKA modification. The span at leucine 40–histidine 62 shows a compositional bias: basic and acidic residues. 2 positions are modified to phosphoserine: serine 44 and serine 45. Threonine 74 carries the phosphothreonine; by CDK5 modification. Residues histidine 88 to glutamine 99 are compositionally biased toward polar residues. Serine 101 carries the post-translational modification Phosphoserine. Over residues glycine 108 to arginine 117 the composition is skewed to basic and acidic residues. The segment covering glutamate 118–glutamine 137 has biased composition (acidic residues). Phosphoserine is present on serine 136.

Belongs to the protein phosphatase inhibitor 1 family. Post-translationally, phosphorylation of Thr-33 is required for activity. In terms of processing, dopamine- and cyclic AMP-regulated neuronal phosphoprotein.

It localises to the cytoplasm. Functionally, inhibitor of protein-phosphatase 1. This Sus scrofa (Pig) protein is Protein phosphatase 1 regulatory subunit 1B (PPP1R1B).